A 446-amino-acid chain; its full sequence is Adenylosuccinate synthetase (446 aa).

GTP is bound by residues 12–18 (GDEGKGK) and 40–42 (GHT). Catalysis depends on D13, which acts as the Proton acceptor. Mg(2+)-binding residues include D13 and G40. Residues 13–16 (DEGK), 38–41 (NAGH), T128, R142, Q223, T238, and R302 each bind IMP. H41 functions as the Proton donor in the catalytic mechanism. 298-304 (TTTGRRR) is a binding site for substrate. GTP-binding positions include R304, 330-332 (KLD), and 412-414 (SLG).

It belongs to the adenylosuccinate synthetase family. As to quaternary structure, homodimer. Requires Mg(2+) as cofactor.

It is found in the cytoplasm. The catalysed reaction is IMP + L-aspartate + GTP = N(6)-(1,2-dicarboxyethyl)-AMP + GDP + phosphate + 2 H(+). It participates in purine metabolism; AMP biosynthesis via de novo pathway; AMP from IMP: step 1/2. Plays an important role in the de novo pathway of purine nucleotide biosynthesis. Catalyzes the first committed step in the biosynthesis of AMP from IMP. The polypeptide is Adenylosuccinate synthetase (Acaryochloris marina (strain MBIC 11017)).